The sequence spans 270 residues: Carboxy-terminal domain RNA polymerase II polypeptide A small phosphatase 2 (270 aa).

A Phosphoserine modification is found at S5. The 159-residue stretch at Q96 to L254 folds into the FCP1 homology domain. D106 acts as the 4-aspartylphosphate intermediate in catalysis. Mg(2+) is bound by residues D106, D108, and N217. Catalysis depends on D108, which acts as the Proton donor.

In terms of assembly, monomer. Interacts with REST. Mg(2+) serves as cofactor. In terms of tissue distribution, expression is restricted to non-neuronal tissues.

It localises to the nucleus. It carries out the reaction O-phospho-L-seryl-[protein] + H2O = L-seryl-[protein] + phosphate. It catalyses the reaction O-phospho-L-threonyl-[protein] + H2O = L-threonyl-[protein] + phosphate. Functionally, preferentially catalyzes the dephosphorylation of 'Ser-5' within the tandem 7 residue repeats in the C-terminal domain (CTD) of the largest RNA polymerase II subunit POLR2A. Negatively regulates RNA polymerase II transcription, possibly by controlling the transition from initiation/capping to processive transcript elongation. Recruited by REST to neuronal genes that contain RE-1 elements, leading to neuronal gene silencing in non-neuronal cells. The polypeptide is Carboxy-terminal domain RNA polymerase II polypeptide A small phosphatase 2 (Ctdsp2) (Mus musculus (Mouse)).